Reading from the N-terminus, the 610-residue chain is Elongation factor 4 (610 aa).

Residues 15-197 enclose the tr-type G domain; that stretch reads KSIRNFSIIA…RIINDIPYPK (183 aa). GTP is bound by residues 27–32 and 144–147; these read DHGKST and NKID.

This sequence belongs to the TRAFAC class translation factor GTPase superfamily. Classic translation factor GTPase family. LepA subfamily.

It is found in the cell membrane. The enzyme catalyses GTP + H2O = GDP + phosphate + H(+). Required for accurate and efficient protein synthesis under certain stress conditions. May act as a fidelity factor of the translation reaction, by catalyzing a one-codon backward translocation of tRNAs on improperly translocated ribosomes. Back-translocation proceeds from a post-translocation (POST) complex to a pre-translocation (PRE) complex, thus giving elongation factor G a second chance to translocate the tRNAs correctly. Binds to ribosomes in a GTP-dependent manner. The protein is Elongation factor 4 of Buchnera aphidicola subsp. Acyrthosiphon pisum (strain 5A).